A 330-amino-acid chain; its full sequence is Phosphate acyltransferase (330 aa).

The protein belongs to the PlsX family. In terms of assembly, homodimer. Probably interacts with PlsY.

It is found in the cytoplasm. The enzyme catalyses a fatty acyl-[ACP] + phosphate = an acyl phosphate + holo-[ACP]. It functions in the pathway lipid metabolism; phospholipid metabolism. Functionally, catalyzes the reversible formation of acyl-phosphate (acyl-PO(4)) from acyl-[acyl-carrier-protein] (acyl-ACP). This enzyme utilizes acyl-ACP as fatty acyl donor, but not acyl-CoA. The polypeptide is Phosphate acyltransferase (Bacillus mycoides (strain KBAB4) (Bacillus weihenstephanensis)).